Reading from the N-terminus, the 368-residue chain is Cyclin-dependent kinase 2 (368 aa).

The Protein kinase domain occupies Phe-45–Phe-330. ATP is bound by residues Ile-51–Val-59 and Lys-74. Residue Asp-170 is the Proton acceptor of the active site. Residues Asn-175 and Asp-188 each contribute to the Mg(2+) site.

It belongs to the protein kinase superfamily. CMGC Ser/Thr protein kinase family. CDC2/CDKX subfamily. Interacts with cye-1; the interaction likely regulates cdk-2 activity and is probably required for gld-1 phosphorylation. Requires Mg(2+) as cofactor.

The enzyme catalyses L-seryl-[protein] + ATP = O-phospho-L-seryl-[protein] + ADP + H(+). It catalyses the reaction L-threonyl-[protein] + ATP = O-phospho-L-threonyl-[protein] + ADP + H(+). Serine/threonine-protein kinase which, in association with cye-1, regulates proliferation, quiescent state and cell fate during the development of several cell lineages. In the embryo, initiates the establishment of cell polarity through the recruitment of the centrosomal proteins spd-2 and spd-5 during prophase. Phosphorylation and inhibition of the translational repressor gld-1 by the cdk-2/cye-1 complex regulates the pool of germline stem cells and the size of the mitotic zone in the gonads by preventing entry into meiosis. The sequence is that of Cyclin-dependent kinase 2 from Caenorhabditis elegans.